The sequence spans 336 residues: MLHLLGQDSRALARKAGISLEDARRITGAVIGRGAPLRSARNVRRAVLDRVEALATPGELRRVACTDAKDGFRRYLLELGDGARVEAVRIPLFDTHHTVCLSSQAGCALGCSFCATGALGLARSLRAWEIVAQLLHVRADSTRPITGVVFMGQGEPFLNYDAVLEAAYTLCDPAGGRIDGRRISISTAGVVPMIRRYTAEGHKFRLCVSLNAAIPWKRRALMPIEEGFPLDELVDAVREHAAQRGRVTLEYVMIAGVNTGDEDAAALGRLLAGIPVRLNPIAVNDATGRHRPPDEAEWNAFRDALARELPGQPIVRRYSGGQDEHAACGMLSSRTR.

Residue Glu-86 is the Proton acceptor of the active site. The region spanning 93–322 is the Radical SAM core domain; the sequence is FDTHHTVCLS…PIVRRYSGGQ (230 aa). The cysteines at positions 100 and 328 are disulfide-linked. Positions 107, 111, and 114 each coordinate [4Fe-4S] cluster. Residues 154–155, Ser-186, and 209–211 contribute to the S-adenosyl-L-methionine site; these read GE and SLN. Cys-328 functions as the S-methylcysteine intermediate in the catalytic mechanism.

The protein belongs to the radical SAM superfamily. RlmN family. The cofactor is [4Fe-4S] cluster.

It localises to the cytoplasm. The polypeptide is Probable RNA methyltransferase Anae109_4379 (Anaeromyxobacter sp. (strain Fw109-5)).